Consider the following 439-residue polypeptide: Phosphomethylpyrimidine synthase (439 aa).

Residues asparagine 67, methionine 96, tyrosine 126, histidine 165, 187-189 (SRG), 228-231 (DSLR), and glutamate 267 each bind substrate. Zn(2+) is bound at residue histidine 271. Position 294 (tyrosine 294) interacts with substrate. Residue histidine 335 participates in Zn(2+) binding. Cysteine 411, cysteine 414, and cysteine 418 together coordinate [4Fe-4S] cluster.

Belongs to the ThiC family. It depends on [4Fe-4S] cluster as a cofactor.

The enzyme catalyses 5-amino-1-(5-phospho-beta-D-ribosyl)imidazole + S-adenosyl-L-methionine = 4-amino-2-methyl-5-(phosphooxymethyl)pyrimidine + CO + 5'-deoxyadenosine + formate + L-methionine + 3 H(+). Its pathway is cofactor biosynthesis; thiamine diphosphate biosynthesis. Its function is as follows. Catalyzes the synthesis of the hydroxymethylpyrimidine phosphate (HMP-P) moiety of thiamine from aminoimidazole ribotide (AIR) in a radical S-adenosyl-L-methionine (SAM)-dependent reaction. In Ignicoccus hospitalis (strain KIN4/I / DSM 18386 / JCM 14125), this protein is Phosphomethylpyrimidine synthase.